The primary structure comprises 269 residues: Eukaryotic translation initiation factor 3 subunit G-1 (269 aa).

The region spanning 188-266 is the RRM domain; sequence AAIRISNLSE…LILSVEWSKP (79 aa).

It belongs to the eIF-3 subunit G family. As to quaternary structure, component of the eukaryotic translation initiation factor 3 (eIF-3) complex. The eIF-3 complex interacts with pix.

It localises to the cytoplasm. Its function is as follows. RNA-binding component of the eukaryotic translation initiation factor 3 (eIF-3) complex, which is involved in protein synthesis of a specialized repertoire of mRNAs and, together with other initiation factors, stimulates binding of mRNA and methionyl-tRNAi to the 40S ribosome. The eIF-3 complex specifically targets and initiates translation of a subset of mRNAs involved in cell proliferation. This subunit can bind 18S rRNA. This is Eukaryotic translation initiation factor 3 subunit G-1 from Drosophila sechellia (Fruit fly).